The following is a 335-amino-acid chain: Tetraacyldisaccharide 4'-kinase (335 aa).

Residue 62–69 participates in ATP binding; that stretch reads NVGGTGKT.

It belongs to the LpxK family.

The catalysed reaction is a lipid A disaccharide + ATP = a lipid IVA + ADP + H(+). It functions in the pathway glycolipid biosynthesis; lipid IV(A) biosynthesis; lipid IV(A) from (3R)-3-hydroxytetradecanoyl-[acyl-carrier-protein] and UDP-N-acetyl-alpha-D-glucosamine: step 6/6. In terms of biological role, transfers the gamma-phosphate of ATP to the 4'-position of a tetraacyldisaccharide 1-phosphate intermediate (termed DS-1-P) to form tetraacyldisaccharide 1,4'-bis-phosphate (lipid IVA). The polypeptide is Tetraacyldisaccharide 4'-kinase (Methylobacillus flagellatus (strain ATCC 51484 / DSM 6875 / VKM B-1610 / KT)).